A 367-amino-acid polypeptide reads, in one-letter code: tRNA-specific 2-thiouridylase MnmA (367 aa).

ATP is bound by residues 13–20 (GLSGGVDS) and Met-39. The tract at residues 99 to 101 (NPD) is interaction with target base in tRNA. Cys-104 serves as the catalytic Nucleophile. Cysteines 104 and 200 form a disulfide. Residue Gly-128 participates in ATP binding. The interval 150–152 (KDQ) is interaction with tRNA. The active-site Cysteine persulfide intermediate is Cys-200. The segment at 307 to 308 (RY) is interaction with tRNA.

This sequence belongs to the MnmA/TRMU family.

The protein resides in the cytoplasm. It catalyses the reaction S-sulfanyl-L-cysteinyl-[protein] + uridine(34) in tRNA + AH2 + ATP = 2-thiouridine(34) in tRNA + L-cysteinyl-[protein] + A + AMP + diphosphate + H(+). Its function is as follows. Catalyzes the 2-thiolation of uridine at the wobble position (U34) of tRNA, leading to the formation of s(2)U34. The chain is tRNA-specific 2-thiouridylase MnmA from Neisseria meningitidis serogroup A / serotype 4A (strain DSM 15465 / Z2491).